The chain runs to 314 residues: UDP-3-O-acyl-N-acetylglucosamine deacetylase (314 aa).

Zn(2+) contacts are provided by His82, His239, and Asp243. Residue His266 is the Proton donor of the active site.

Belongs to the LpxC family. Zn(2+) serves as cofactor.

The catalysed reaction is a UDP-3-O-[(3R)-3-hydroxyacyl]-N-acetyl-alpha-D-glucosamine + H2O = a UDP-3-O-[(3R)-3-hydroxyacyl]-alpha-D-glucosamine + acetate. The protein operates within glycolipid biosynthesis; lipid IV(A) biosynthesis; lipid IV(A) from (3R)-3-hydroxytetradecanoyl-[acyl-carrier-protein] and UDP-N-acetyl-alpha-D-glucosamine: step 2/6. Functionally, catalyzes the hydrolysis of UDP-3-O-myristoyl-N-acetylglucosamine to form UDP-3-O-myristoylglucosamine and acetate, the committed step in lipid A biosynthesis. The polypeptide is UDP-3-O-acyl-N-acetylglucosamine deacetylase (Myxococcus xanthus (strain DK1622)).